The chain runs to 138 residues: Thioredoxin H2-1 (138 aa).

Positions 1–20 are disordered; the sequence is MGGAFSTSKPKPAAGEEGGE. Positions 12–129 constitute a Thioredoxin domain; sequence PAAGEEGGES…LEKTINTLRS (118 aa). Catalysis depends on nucleophile residues cysteine 55 and cysteine 58. Cysteine 55 and cysteine 58 are disulfide-bonded.

This sequence belongs to the thioredoxin family. Plant H-type subfamily.

The protein localises to the cytoplasm. Functionally, probable thiol-disulfide oxidoreductase that may be involved in the redox regulation of a number of cytosolic enzymes. This Oryza sativa subsp. japonica (Rice) protein is Thioredoxin H2-1.